Here is an 896-residue protein sequence, read N- to C-terminus: Translation initiation factor IF-2 (896 aa).

The disordered stretch occupies residues 49–310 (LKKEHGDTSG…MQQGFDKSAT (262 aa)). Residues 57–66 (SGETEPTRLT) are compositionally biased toward polar residues. Composition is skewed to basic and acidic residues over residues 101–174 (STIE…KDMN), 184–240 (AKKE…KSAD), and 250–263 (REAE…DEKA). Over residues 284–295 (RNQRGRGGKGKL) the composition is skewed to basic residues. The region spanning 395-564 (GRAPVVTIMG…LLQSEVLELT (170 aa)) is the tr-type G domain. The tract at residues 404–411 (GHVDHGKT) is G1. Residue 404 to 411 (GHVDHGKT) participates in GTP binding. Residues 429–433 (GITQH) form a G2 region. Residues 450 to 453 (DTPG) are G3. Residues 450-454 (DTPGH) and 504-507 (NKID) each bind GTP. Positions 504-507 (NKID) are G4. Residues 540 to 542 (SAK) are G5.

The protein belongs to the TRAFAC class translation factor GTPase superfamily. Classic translation factor GTPase family. IF-2 subfamily.

The protein resides in the cytoplasm. One of the essential components for the initiation of protein synthesis. Protects formylmethionyl-tRNA from spontaneous hydrolysis and promotes its binding to the 30S ribosomal subunits. Also involved in the hydrolysis of GTP during the formation of the 70S ribosomal complex. The polypeptide is Translation initiation factor IF-2 (Vibrio atlanticus (strain LGP32) (Vibrio splendidus (strain Mel32))).